Reading from the N-terminus, the 325-residue chain is Elongation factor P--(R)-beta-lysine ligase (325 aa).

76 to 78 lines the substrate pocket; it reads SPE. ATP contacts are provided by residues 100 to 102 and N109; that span reads RNE. Position 118 (Y118) interacts with substrate. Residue 244–245 coordinates ATP; that stretch reads EL. E251 is a binding site for substrate. ATP is bound at residue G300.

This sequence belongs to the class-II aminoacyl-tRNA synthetase family. EpmA subfamily. As to quaternary structure, homodimer.

It catalyses the reaction D-beta-lysine + L-lysyl-[protein] + ATP = N(6)-((3R)-3,6-diaminohexanoyl)-L-lysyl-[protein] + AMP + diphosphate + H(+). Its function is as follows. With EpmB is involved in the beta-lysylation step of the post-translational modification of translation elongation factor P (EF-P). Catalyzes the ATP-dependent activation of (R)-beta-lysine produced by EpmB, forming a lysyl-adenylate, from which the beta-lysyl moiety is then transferred to the epsilon-amino group of a conserved specific lysine residue in EF-P. The chain is Elongation factor P--(R)-beta-lysine ligase from Hamiltonella defensa subsp. Acyrthosiphon pisum (strain 5AT).